A 506-amino-acid polypeptide reads, in one-letter code: CDK5 regulatory subunit-associated protein 3 (506 aa).

3 short sequence motifs (shuffled ATG8-binding motif) span residues 267 to 270 (IDWG), 292 to 295 (IDWG), and 310 to 313 (IDWG). A required for interaction with UFL1 and mediates interaction with CHEK1 region spans residues 269–506 (WGDFGVEAVS…RPVNLMGTSL (238 aa)). Residues 355 to 370 (DELMELEIFLAQRAVE) form an RPL10a-binding domain (RBD) region. Lysine 450 is covalently cross-linked (Glycyl lysine isopeptide (Lys-Gly) (interchain with G-Cter in SUMO2)).

Belongs to the CDK5RAP3 family. Substrate adapter component of the UFM1 ribosome E3 ligase (UREL) complex, composed of UFL1, DDRGK1 and CDK5RAP3. Interaction with UFL1 anchors CDK5RAP3 in the cytoplasm, preventing its translocation to the nucleus which allows expression of the CCND1 cyclin and progression of cells through the G1/S transition. Interacts with ATG8 family proteins MAP1LC3A, MAP1LC3B, GABARAP, GABARAPL1 and GABARAPL2. Interacts with CDK5R1; competes with CDK5RAP1 and CDK5RAP2. Interacts with RELA. Interacts with CHEK1; may negatively regulate CHEK1 and thereby stimulate entry into mitosis. Interacts with CDKN2A/ARF and MDM2; forms a ternary complex involved in regulation of p53/TP53. Interacts with MAPK14. Interacts with CCNB1. Interacts with TUBG1; may regulate CDK5RAP3 in mitotic G2/M transition checkpoint. As to quaternary structure, (Microbial infection) Interacts with hepatitis B virus large envelope protein mutant pre-s2; promotes mitotic entry. Post-translationally, may be phosphorylated by CDK5. Ubiquitinated. Probably triggers proteasomal degradation and is negatively regulated by UFL1. In terms of processing, may be ufmylated. Post-translationally, cleaved by caspases early during apoptosis, the resulting peptides may play a role in rupture of the nuclear envelope. In terms of tissue distribution, ubiquitously expressed. Expressed in heart, brain, placenta, lung, liver, skeletal muscle, kidney and pancreas. Isoform 3 is expressed in kidney, liver, skeletal muscle and placenta.

It localises to the endoplasmic reticulum membrane. It is found in the cytoplasm. The protein resides in the nucleus. Its subcellular location is the cytoskeleton. The protein localises to the microtubule organizing center. It localises to the centrosome. In terms of biological role, substrate adapter of E3 ligase complexes mediating ufmylation, the covalent attachment of the ubiquitin-like modifier UFM1 to substrate proteins, and which is involved in various processes, such as ribosome recycling and reticulophagy (also called ER-phagy). As part of the UREL complex, plays a key role in ribosome recycling by promoting mono-ufmylation of RPL26/uL24 subunit of the 60S ribosome. Ufmylation of RPL26/uL24 occurs on free 60S ribosomes following ribosome dissociation: it weakens the junction between post-termination 60S subunits and SEC61 translocons, promoting release and recycling of the large ribosomal subunit from the endoplasmic reticulum membrane. Ufmylation of RPL26/uL24 and subsequent 60S ribosome recycling either take place after normal termination of translation or after ribosome stalling during cotranslational translocation at the endoplasmic reticulum. Within the UREL complex, CDK5RAP3 acts as a substrate adapter that constrains UFL1 ligase activity to mono-ufmylate RPL26/uL24 at 'Lys-134'. The UREL complex is also involved in reticulophagy in response to endoplasmic reticulum stress by promoting ufmylation of proteins such as CYB5R3, thereby promoting lysosomal degradation of ufmylated proteins. Also acts as a regulator of transcription: negatively regulates NF-kappa-B-mediated gene transcription through the control of RELA phosphorylation. Also regulates mitotic G2/M transition checkpoint and mitotic G2 DNA damage checkpoint. Through its interaction with CDKN2A/ARF and MDM2 may induce MDM2-dependent p53/TP53 ubiquitination, stabilization and activation in the nucleus, thereby promoting G1 cell cycle arrest and inhibition of cell proliferation. May also play a role in the rupture of the nuclear envelope during apoptosis. May regulate MAPK14 activity by regulating its dephosphorylation by PPM1D/WIP1. Required for liver development. Functionally, (Microbial infection) May be negatively regulated by hepatitis B virus large envelope protein mutant pre-s2 to promote mitotic entry. The protein is CDK5 regulatory subunit-associated protein 3 of Homo sapiens (Human).